Here is a 122-residue protein sequence, read N- to C-terminus: Large ribosomal subunit protein bL12 (122 aa).

Belongs to the bacterial ribosomal protein bL12 family. In terms of assembly, homodimer. Part of the ribosomal stalk of the 50S ribosomal subunit. Forms a multimeric L10(L12)X complex, where L10 forms an elongated spine to which 2 to 4 L12 dimers bind in a sequential fashion. Binds GTP-bound translation factors.

In terms of biological role, forms part of the ribosomal stalk which helps the ribosome interact with GTP-bound translation factors. Is thus essential for accurate translation. This Acinetobacter baumannii (strain AB0057) protein is Large ribosomal subunit protein bL12.